Reading from the N-terminus, the 131-residue chain is D-ribose pyranase (131 aa).

Residue His20 is the Proton donor of the active site. Residues Asp28, His98, and 120-122 (YAN) contribute to the substrate site.

It belongs to the RbsD / FucU family. RbsD subfamily. As to quaternary structure, homodecamer.

It localises to the cytoplasm. It catalyses the reaction beta-D-ribopyranose = beta-D-ribofuranose. It participates in carbohydrate metabolism; D-ribose degradation; D-ribose 5-phosphate from beta-D-ribopyranose: step 1/2. Its function is as follows. Catalyzes the interconversion of beta-pyran and beta-furan forms of D-ribose. In Bacillus cereus (strain AH187), this protein is D-ribose pyranase.